The primary structure comprises 343 residues: Anthranilate phosphoribosyltransferase (343 aa).

5-phospho-alpha-D-ribose 1-diphosphate contacts are provided by residues G84, 87–88 (GD), T92, 94–97 (NIST), 112–120 (KHGNRSASS), and S124. Residue G84 participates in anthranilate binding. S96 lines the Mg(2+) pocket. N115 contacts anthranilate. Residue R170 participates in anthranilate binding. Mg(2+) contacts are provided by D229 and E230.

This sequence belongs to the anthranilate phosphoribosyltransferase family. In terms of assembly, homodimer. Mg(2+) is required as a cofactor.

The catalysed reaction is N-(5-phospho-beta-D-ribosyl)anthranilate + diphosphate = 5-phospho-alpha-D-ribose 1-diphosphate + anthranilate. Its pathway is amino-acid biosynthesis; L-tryptophan biosynthesis; L-tryptophan from chorismate: step 2/5. Functionally, catalyzes the transfer of the phosphoribosyl group of 5-phosphorylribose-1-pyrophosphate (PRPP) to anthranilate to yield N-(5'-phosphoribosyl)-anthranilate (PRA). The protein is Anthranilate phosphoribosyltransferase of Bordetella pertussis (strain Tohama I / ATCC BAA-589 / NCTC 13251).